Here is a 415-residue protein sequence, read N- to C-terminus: MRLPRASSPCGLAWGPLLLGLSGLLVASQPQLVPPYRIENQTCWDQDKEYYEPMHDVCCSRCPPGEFVFAVCSRSQDTVCKTCPHNSYNEHWNHLSTCQLCRPCDIVLGFEEVAPCTSDRKAECRCQPGMSCVYLDNECVHCEEERLVLCQPGTEAEVTDEIMDTDVNCVPCKPGHFQNTSSPRARCQPHTRCEIQGLVEAAPGTSYSDTICKNPPEPGAMLLLAILLSLVLFLLFTTVLACAWMRHPSLCRKLGTLLKRHPEGEESPPCPAPRADPHFPDLAEPLLPMSGDLSPSPAGPPTAPSLEEVVLQQQSPLVQARELEAEPGEHGQVAHGANGIHVTGGSVTVTGNIYIYNGPVLGGTRGPGDPPAPPEPPYPTPEEGAPGPSELSTPYQEDGKAWHLAETETLGCQDL.

A signal peptide spans Met1–Pro30. Topologically, residues Gln31–Leu223 are extracellular. The N-linked (GlcNAc...) asparagine glycan is linked to Asn40. TNFR-Cys repeat units follow at residues Thr42–Lys81, Thr82–Cys124, Arg125–Val170, and Pro171–Lys213. 10 disulfides stabilise this stretch: Cys43-Cys58, Cys59-Cys72, Cys62-Cys80, Cys83-Cys98, Cys101-Cys116, Cys104-Cys124, Cys126-Cys132, Cys139-Cys150, Cys142-Cys169, and Cys172-Cys187. Asn179 carries an N-linked (GlcNAc...) asparagine glycan. The chain crosses the membrane as a helical span at residues Leu224–Trp244. At Met245 to Leu415 the chain is on the cytoplasmic side. Residues His261–Pro304 form a disordered region. Ser315 is subject to Phosphoserine. Residues Leu361–Gly399 form a disordered region. The segment covering Gly368–Thr380 has biased composition (pro residues).

As to quaternary structure, self-associates; dimerization and trimerization are promoted by lymphotoxin (LTA(3)). Associates with TRAF3. Associates with TRAF4. Associates with TRAF5.

Its subcellular location is the membrane. Receptor for the heterotrimeric lymphotoxin containing LTA and LTB, and for TNFS14/LIGHT. Activates NF-kappa-B signaling upon stimulation with lymphotoxin. Promotes apoptosis via TRAF3 and TRAF5. May play a role in the development of lymphoid organs. Its function is as follows. (Microbial infection) Plays a role in host defense against Zika virus infection. This chain is Tumor necrosis factor receptor superfamily member 3 (Ltbr), found in Mus musculus (Mouse).